The primary structure comprises 44 residues: Brevinin-1PLa (44 aa).

The propeptide occupies 1-18 (NAEEERRDEPDETDVEVE). Cysteine 38 and cysteine 44 are oxidised to a cystine.

Expressed by the skin glands.

It is found in the secreted. Functionally, antimicrobial peptide. The chain is Brevinin-1PLa from Lithobates palustris (Pickerel frog).